Here is a 409-residue protein sequence, read N- to C-terminus: Wadjet protein JetD (409 aa).

Functionally, component of antiplasmid transformation system Wadjet type I, composed of JetA, JetB, JetC and JetD. Expression of Wadjet type I in B.subtilis (strain BEST7003) reduces the transformation efficiency of plasmid pHCMC05. The sequence is that of Wadjet protein JetD from Bacillus cereus (strain Q1).